The primary structure comprises 606 residues: Mannan endo-1,4-beta-mannosidase A (606 aa).

The signal sequence occupies residues 1 to 19 (MKSLNVILTLLSLIISVLS). The 119-residue stretch at 22-140 (VYYEAEDGKL…WMWVDAFVIN (119 aa)) folds into the CBM6 domain. In terms of domain architecture, GH26 spans 164 to 458 (PAAKKLYDFL…FNHKTVMNMD (295 aa)). Trp-285 contributes to the substrate binding site. Catalysis depends on Glu-318, which acts as the Proton donor. Residues Trp-323 and Tyr-378 each contribute to the substrate site. The active-site Nucleophile is Glu-406. A linker region spans residues 472–489 (SGSSHNGNSESNSNTGNS). 3 CBM10 domains span residues 491 to 527 (ECWSINLGYPCCIGDYVVTTDENGDWGVENNEWCGIV), 530 to 566 (SCWSEPLGYPCCVGNTVISADESGDWGVENNEWCGIV), and 569 to 605 (SCWAEFLGYPCCVGNTVISTDEFGDWGVENDDWCGIL). A substrate-binding site is contributed by Trp-493.

Belongs to the glycosyl hydrolase 26 family.

It carries out the reaction Random hydrolysis of (1-&gt;4)-beta-D-mannosidic linkages in mannans, galactomannans and glucomannans.. Functionally, hydrolyzes 1,4-beta linked polysaccharide backbones of mannans, one of the major hemicellulose components in hardwoods and softwoods. Shows very high activity against mannohexaose but not against mannopentaose and smaller mannooligosaccharides. The major products released from mannooligosaccharide hydrolysis are mannose and mannobiose. The reiterated 40 AA domain is involved in binding the cellulase-hemicellulase complex. The polypeptide is Mannan endo-1,4-beta-mannosidase A (MANA) (Piromyces sp).